We begin with the raw amino-acid sequence, 474 residues long: 6-phospho-beta-galactosidase (474 aa).

Positions 19, 116, 159, 160, and 297 each coordinate D-galactose 6-phosphate. The active-site Proton donor is glutamate 160. Glutamate 375 serves as the catalytic Nucleophile. 4 residues coordinate D-galactose 6-phosphate: serine 433, tryptophan 434, lysine 440, and tyrosine 442.

The protein belongs to the glycosyl hydrolase 1 family.

The catalysed reaction is a 6-phospho-beta-D-galactoside + H2O = D-galactose 6-phosphate + an alcohol. It functions in the pathway carbohydrate metabolism; lactose degradation; D-galactose 6-phosphate and beta-D-glucose from lactose 6-phosphate: step 1/1. The polypeptide is 6-phospho-beta-galactosidase (Lacticaseibacillus casei (strain BL23) (Lactobacillus casei)).